Reading from the N-terminus, the 204-residue chain is Tumor protein D53 (204 aa).

Positions 1–31 (MEAQAQGLLETEPLQGRDGDAVGSADFSSML) are disordered. Residues 22 to 73 (VGSADFSSMLSEEEKEELKAELIQLEDEITTLRQVLSAKERHLVEIKQKLGM) are a coiled coil. 4 positions are modified to phosphoserine: Ser29, Ser86, Ser122, and Ser131. Arg133 is subject to Omega-N-methylarginine. Thr146 carries the post-translational modification Phosphothreonine. Phosphoserine is present on residues Ser149 and Ser174. Positions 164–204 (KVGGTNHGGGSFEEVLNSTAHASSQNASAGSRQTKDEELQC) are disordered. Polar residues predominate over residues 179-195 (LNSTAHASSQNASAGSR).

The protein belongs to the TPD52 family. In terms of assembly, forms a homodimer or heterodimer with other members of the family.

The polypeptide is Tumor protein D53 (Tpd52l1) (Mus musculus (Mouse)).